The sequence spans 565 residues: Anaphase-promoting complex subunit 7 (565 aa).

TPR repeat units lie at residues 101 to 134, 169 to 202, 203 to 236, 237 to 270, 339 to 372, 373 to 406, 407 to 439, 442 to 474, 475 to 508, and 509 to 531; these read EIEVKYKMAECYTMLKLDKDAIAVLDGIPSRQRT, LDAILGLLSLSVKGAEVASMTMNVIQTVPNLDWL, SVWIKAYAFVHTGDNSRAINTICSLEKKSLLRDN, VDLLGSLADLYFRAGDSKNSVLKFEQAQMLDPYL, VQALLLKGAALRNMGRVQEAIIHFREAIRLAPCR, LDCYEGLIECYLASNSIREAMVMANNVYKTLGAN, AQTLTLLATVCLEDPVTQEKAKTLLDKALAQRP, VKAVVKKAELLSREQKYEDGIALLRNALANQSD, CVLHRILGDFLVAVNEYQEAMDQYSIALSLDPND, and QKSLEGMQKMEKEESPTDATQEE. At Lys-229 the chain carries N6-acetyllysine. Basic and acidic residues predominate over residues 513 to 523; the sequence is EGMQKMEKEES. A disordered region spans residues 513-565; sequence EGMQKMEKEESPTDATQEEDVDDMEGSGEEGDLEGSDSEAAQWADQEQWFGMQ. A compositionally biased stretch (acidic residues) spans 528 to 549; sequence TQEEDVDDMEGSGEEGDLEGSD.

Belongs to the APC7 family. V-shaped homodimer. The mammalian APC/C is composed at least of 14 distinct subunits ANAPC1, ANAPC2, CDC27/APC3, ANAPC4, ANAPC5, CDC16/APC6, ANAPC7, CDC23/APC8, ANAPC10, ANAPC11, CDC26/APC12, ANAPC13, ANAPC15 and ANAPC16 that assemble into a complex of at least 19 chains with a combined molecular mass of around 1.2 MDa; APC/C interacts with FZR1 and FBXO5.

Its subcellular location is the cytoplasm. It localises to the cytoskeleton. It is found in the nucleus. The protein localises to the spindle. It participates in protein modification; protein ubiquitination. In terms of biological role, component of the anaphase promoting complex/cyclosome (APC/C), a cell cycle-regulated E3 ubiquitin ligase that controls progression through mitosis and the G1 phase of the cell cycle. The APC/C complex acts by mediating ubiquitination and subsequent degradation of target proteins: it mainly mediates the formation of 'Lys-11'-linked polyubiquitin chains and, to a lower extent, the formation of 'Lys-48'- and 'Lys-63'-linked polyubiquitin chains. The APC/C complex catalyzes assembly of branched 'Lys-11'-/'Lys-48'-linked branched ubiquitin chains on target proteins. APC7 is not required for the assembly of the APC/C complex, but has an enzyme-substrate adapter activity mediating the processive ubiquitination of specific substrates. Involved in brain development through the specific ubiquitination and clearance of MKI67 from constitutive heterochromatin after neuronal progenitors exit mitosis. This is Anaphase-promoting complex subunit 7 (Anapc7) from Mus musculus (Mouse).